Consider the following 149-residue polypeptide: Large ribosomal subunit protein bL9 (149 aa).

Belongs to the bacterial ribosomal protein bL9 family.

Its function is as follows. Binds to the 23S rRNA. The protein is Large ribosomal subunit protein bL9 of Stenotrophomonas maltophilia (strain K279a).